Consider the following 215-residue polypeptide: Protein-L-isoaspartate O-methyltransferase (215 aa).

The active site involves serine 62.

The protein belongs to the methyltransferase superfamily. L-isoaspartyl/D-aspartyl protein methyltransferase family.

It localises to the cytoplasm. The catalysed reaction is [protein]-L-isoaspartate + S-adenosyl-L-methionine = [protein]-L-isoaspartate alpha-methyl ester + S-adenosyl-L-homocysteine. Catalyzes the methyl esterification of L-isoaspartyl residues in peptides and proteins that result from spontaneous decomposition of normal L-aspartyl and L-asparaginyl residues. It plays a role in the repair and/or degradation of damaged proteins. This is Protein-L-isoaspartate O-methyltransferase from Ruegeria pomeroyi (strain ATCC 700808 / DSM 15171 / DSS-3) (Silicibacter pomeroyi).